A 521-amino-acid polypeptide reads, in one-letter code: Medium/long-chain-fatty-acid--[acyl-carrier-protein] ligase MbtM (521 aa).

It belongs to the ATP-dependent AMP-binding enzyme family.

The enzyme catalyses a long-chain fatty acid + holo-[ACP] + ATP = a long-chain fatty acyl-[ACP] + AMP + diphosphate. It catalyses the reaction a medium-chain fatty acid + holo-[ACP] + ATP = a medium-chain fatty acyl-[ACP] + AMP + diphosphate. The protein operates within siderophore biosynthesis; mycobactin biosynthesis. Activates lipidic moieties required for mycobactin biosynthesis. Converts medium- to long-chain aliphatic fatty acids into acyl adenylate, which is further transferred on to the phosphopantetheine arm of the carrier protein MbtL. This Mycobacterium tuberculosis (strain CDC 1551 / Oshkosh) protein is Medium/long-chain-fatty-acid--[acyl-carrier-protein] ligase MbtM (mbtM).